We begin with the raw amino-acid sequence, 397 residues long: MSESVHTNTSLWSKGMKAVIVAQFLSAFGDNALLFATLALLKAQFYPEWSQPILQMVFVGAYILFAPFVGQVADSFAKGRVMMFANGLKLLGAASICFGINPFLGYTLVGVGAAAYSPAKYGILGELTTGSKLVKANGLMEASTIAAILLGSVAGGVLADWHVLVALAACALAYGGAVVANIYIPKLAAARPGQSWNLINMTRSFLNACTSLWRNGETRFSLVGTSLFWGAGVTLRFLLVLWVPVALGITDNATPTYLNAMVAIGIVVGAGAAAKLVTLETVSRCMPAGILIGVVVLIFSLQHEQLPAYALLMLIGVLGGFFVVPLNALLQERGKKSVGAGNAIAVQNLGENSAMLLMLGIYSLAVMVGIPVVPIGIGFGALFALAITALWIWQRRH.

Over 1–17 the chain is Periplasmic; it reads MSESVHTNTSLWSKGMK. The helical transmembrane segment at 18–38 threads the bilayer; it reads AVIVAQFLSAFGDNALLFATL. Residues 39–52 lie on the Cytoplasmic side of the membrane; that stretch reads ALLKAQFYPEWSQP. A helical membrane pass occupies residues 53 to 73; that stretch reads ILQMVFVGAYILFAPFVGQVA. Over 74-90 the chain is Periplasmic; sequence DSFAKGRVMMFANGLKL. Residues 91–111 form a helical membrane-spanning segment; it reads LGAASICFGINPFLGYTLVGV. Over 112 to 144 the chain is Cytoplasmic; it reads GAAAYSPAKYGILGELTTGSKLVKANGLMEAST. A helical membrane pass occupies residues 145-165; the sequence is IAAILLGSVAGGVLADWHVLV. Position 166 (Ala-166) is a topological domain, periplasmic. Residues 167 to 187 traverse the membrane as a helical segment; the sequence is LAACALAYGGAVVANIYIPKL. At 188 to 226 the chain is on the cytoplasmic side; that stretch reads AAARPGQSWNLINMTRSFLNACTSLWRNGETRFSLVGTS. The helical transmembrane segment at 227–247 threads the bilayer; sequence LFWGAGVTLRFLLVLWVPVAL. Topologically, residues 248–256 are periplasmic; the sequence is GITDNATPT. The helical transmembrane segment at 257–277 threads the bilayer; it reads YLNAMVAIGIVVGAGAAAKLV. The Cytoplasmic portion of the chain corresponds to 278 to 280; that stretch reads TLE. A helical transmembrane segment spans residues 281–301; that stretch reads TVSRCMPAGILIGVVVLIFSL. Topologically, residues 302-304 are periplasmic; that stretch reads QHE. A helical transmembrane segment spans residues 305 to 325; sequence QLPAYALLMLIGVLGGFFVVP. At 326 to 343 the chain is on the cytoplasmic side; it reads LNALLQERGKKSVGAGNA. The chain crosses the membrane as a helical span at residues 344-364; it reads IAVQNLGENSAMLLMLGIYSL. At 365-366 the chain is on the periplasmic side; it reads AV. Residues 367 to 387 form a helical membrane-spanning segment; it reads MVGIPVVPIGIGFGALFALAI. The Cytoplasmic segment spans residues 388-397; the sequence is TALWIWQRRH.

The protein belongs to the major facilitator superfamily. LplT (TC 2.A.1.42) family.

Its subcellular location is the cell inner membrane. Functionally, catalyzes the facilitated diffusion of 2-acyl-glycero-3-phosphoethanolamine (2-acyl-GPE) into the cell. This Escherichia coli O157:H7 (strain EC4115 / EHEC) protein is Lysophospholipid transporter LplT.